We begin with the raw amino-acid sequence, 312 residues long: Ribosomal protein L11 methyltransferase (312 aa).

S-adenosyl-L-methionine contacts are provided by Thr162, Gly183, Asp205, and Asn248.

The protein belongs to the methyltransferase superfamily. PrmA family.

The protein localises to the cytoplasm. The catalysed reaction is L-lysyl-[protein] + 3 S-adenosyl-L-methionine = N(6),N(6),N(6)-trimethyl-L-lysyl-[protein] + 3 S-adenosyl-L-homocysteine + 3 H(+). In terms of biological role, methylates ribosomal protein L11. This Bacillus cereus (strain B4264) protein is Ribosomal protein L11 methyltransferase.